The sequence spans 155 residues: uncharacterized protein (155 aa).

The first 21 residues, 1-21, serve as a signal peptide directing secretion; that stretch reads MFFIVAAGFVIAALIAAIGMA. The interval 35–155 is disordered; that stretch reads GQTKPATTRP…PVYRPPEEMV (121 aa). Residues 118 to 128 show a composition bias toward polar residues; sequence ATASNTPQNEA.

This is an uncharacterized protein from Schizosaccharomyces pombe (strain 972 / ATCC 24843) (Fission yeast).